The sequence spans 99 residues: Cell division protein FtsB (99 aa).

The Cytoplasmic segment spans residues 1–3; it reads MKF. A helical transmembrane segment spans residues 4-21; the sequence is FVIALIVLLGLLQYRLWS. Residues 22 to 99 lie on the Periplasmic side of the membrane; that stretch reads GDNSLPEYFV…GDRSVSSPSQ (78 aa). The stretch at 31–73 forms a coiled coil; that stretch reads VLQKQIAAQQEGNAKLNERNQVLKEEIIDLKSGTEAIEERARN.

It belongs to the FtsB family. As to quaternary structure, part of a complex composed of FtsB, FtsL and FtsQ.

The protein localises to the cell inner membrane. In terms of biological role, essential cell division protein. May link together the upstream cell division proteins, which are predominantly cytoplasmic, with the downstream cell division proteins, which are predominantly periplasmic. The polypeptide is Cell division protein FtsB (Shewanella sp. (strain ANA-3)).